The primary structure comprises 249 residues: ATP synthase subunit a 1 (249 aa).

6 helical membrane passes run 26–46, 84–104, 114–134, 143–163, 193–213, and 216–236; these read FTNV…FLYL, FFPF…LGLF, IIVT…YGFF, LFVP…IEII, FVVS…LPLI, and VAIT…FTVL.

Belongs to the ATPase A chain family. As to quaternary structure, F-type ATPases have 2 components, CF(1) - the catalytic core - and CF(0) - the membrane proton channel. CF(1) has five subunits: alpha(3), beta(3), gamma(1), delta(1), epsilon(1). CF(0) has three main subunits: a(1), b(2) and c(9-12). The alpha and beta chains form an alternating ring which encloses part of the gamma chain. CF(1) is attached to CF(0) by a central stalk formed by the gamma and epsilon chains, while a peripheral stalk is formed by the delta and b chains.

The protein resides in the cell inner membrane. Its function is as follows. Key component of the proton channel; it plays a direct role in the translocation of protons across the membrane. The chain is ATP synthase subunit a 1 from Brucella anthropi (strain ATCC 49188 / DSM 6882 / CCUG 24695 / JCM 21032 / LMG 3331 / NBRC 15819 / NCTC 12168 / Alc 37) (Ochrobactrum anthropi).